The following is a 614-amino-acid chain: Protein B602L (614 aa).

A run of 31 repeats spans residues 161–164, 165–168, 169–172, 173–176, 177–180, 181–184, 185–188, 189–192, 193–196, 197–200, 201–204, 205–208, 209–212, 213–216, 217–220, 221–224, 225–228, 229–232, 233–236, 237–240, 241–244, 245–248, 249–252, 253–256, 257–260, 261–264, 265–268, 269–272, 273–276, 277–280, and 281–284. Residues 161–284 form a 28 X 4 AA tandem repeats of [CNS]-[AV]-[DNS]-[IT] region; sequence CASTNADTSA…DINANINANT (124 aa).

It belongs to the asfivirus B602L family.

It localises to the host cytoplasm. Its function is as follows. Plays an essential role in the assembly of the icosahedral capsid of the virus. Allows the assembly of 3 molecules of hexon protein p72 and formation of a thermostable trimer. This African swine fever virus (isolate Tick/Malawi/Lil 20-1/1983) (ASFV) protein is Protein B602L.